Consider the following 458-residue polypeptide: Ectonucleotide pyrophosphatase/phosphodiesterase family member 7 (458 aa).

The first 21 residues, 1-21 (MRGPAVLLTVALATLLAPGAG), serve as a signal peptide directing secretion. The Extracellular portion of the chain corresponds to 22 to 433 (APVQSQGSQN…RPTLLPKGRS (412 aa)). Residues D39 and T75 each contribute to the Zn(2+) site. Residues 72–78 (VTMTSPC) form a required for enzyme activity region. T75 serves as the catalytic Nucleophile. N96 serves as a coordination point for substrate. N100, N121, N146, and N168 each carry an N-linked (GlcNAc...) asparagine glycan. 4 residues coordinate Zn(2+): D199, H203, D246, and H247. N267 is a glycosylation site (N-linked (GlcNAc...) asparagine). Zn(2+) is bound at residue H353. A helical membrane pass occupies residues 434–454 (ALPPSSRPLLVMGLLGTVILL). The Cytoplasmic segment spans residues 455-458 (SEVA).

It belongs to the nucleotide pyrophosphatase/phosphodiesterase family. Zn(2+) is required as a cofactor. N-glycosylated; required for activity and transport to the plasma membrane. Detected in the colon (at protein level). Expressed in the duodenum, jejunum and liver and at low levels in the ileum. Expression was very low in the esophagus, stomach and colon.

The protein resides in the cell membrane. The catalysed reaction is a sphingomyelin + H2O = phosphocholine + an N-acylsphing-4-enine + H(+). It catalyses the reaction 1-hexadecanoyl-sn-glycero-3-phosphocholine + H2O = 1-hexadecanoyl-sn-glycerol + phosphocholine + H(+). The enzyme catalyses a 1-O-alkyl-2-acetyl-sn-glycero-3-phosphocholine + H2O = a 1-O-alkyl-2-acetyl-sn-glycerol + phosphocholine + H(+). It carries out the reaction 1-O-octadecyl-2-acetyl-sn-glycero-3-phosphocholine + H2O = 1-O-octadecyl-2-acetyl-sn-glycerol + phosphocholine + H(+). Its activity is regulated as follows. Inhibited in a dose dependent manner by ATP, imidazole, orthovanadate and zinc ion. Not inhibited by ADP, AMP and EDTA. In terms of biological role, choline-specific phosphodiesterase that hydrolyzes sphingomyelin releasing the ceramide and phosphocholine and therefore is involved in sphingomyelin digestion, ceramide formation, and fatty acid (FA) absorption in the gastrointestinal tract. Also has phospholipase C activity and can also cleave phosphocholine from palmitoyl lyso-phosphatidylcholine and platelet-activating factor (PAF) leading to its inactivation. Does not have nucleotide pyrophosphatase activity. May promote cholesterol absorption by affecting the levels of sphingomyelin derived from either diet or endogenous sources, in the intestinal lumen. The polypeptide is Ectonucleotide pyrophosphatase/phosphodiesterase family member 7 (Homo sapiens (Human)).